Consider the following 447-residue polypeptide: Tubulin beta chain (447 aa).

Positions 11, 69, 138, 142, 143, 144, 204, and 226 each coordinate GTP. Glu-69 is a binding site for Mg(2+). The segment at 424–447 is disordered; the sequence is QYQEASVSEGEEEYDEEAPLEGEE. A compositionally biased stretch (acidic residues) spans 432–447; that stretch reads EGEEEYDEEAPLEGEE.

This sequence belongs to the tubulin family. Dimer of alpha and beta chains. A typical microtubule is a hollow water-filled tube with an outer diameter of 25 nm and an inner diameter of 15 nM. Alpha-beta heterodimers associate head-to-tail to form protofilaments running lengthwise along the microtubule wall with the beta-tubulin subunit facing the microtubule plus end conferring a structural polarity. Microtubules usually have 13 protofilaments but different protofilament numbers can be found in some organisms and specialized cells. It depends on Mg(2+) as a cofactor.

It is found in the cytoplasm. Its subcellular location is the cytoskeleton. Functionally, tubulin is the major constituent of microtubules, a cylinder consisting of laterally associated linear protofilaments composed of alpha- and beta-tubulin heterodimers. Microtubules grow by the addition of GTP-tubulin dimers to the microtubule end, where a stabilizing cap forms. Below the cap, tubulin dimers are in GDP-bound state, owing to GTPase activity of alpha-tubulin. The protein is Tubulin beta chain (TUB1) of Dothistroma septosporum (Red band needle blight fungus).